The following is a 411-amino-acid chain: Secretion apparatus protein BsaZ (411 aa).

4 helical membrane passes run 28-48 (IVALIVIATGALAAPALVDLT), 80-100 (IAAPFVLLCAAAGALPSLVQS), 137-157 (ALLYVGVFALTVRVFADLYHA), and 175-195 (IVLTVRLVLLFLLCALPVLIL). The segment at 341 to 411 (AANRGGPPPE…APARTGDQNA (71 aa)) is disordered. The span at 370-404 (DACADNAFPDDAPPGAAAPNAGSPDSPAPDGGAPA) shows a compositional bias: low complexity.

The protein belongs to the type III secretion exporter family.

The protein resides in the cell membrane. Its function is as follows. Part of the bsa type III secretion system, is involved in the intracellular replication of invading bacteria inside the host cell. Probably necessary for the lysis of the vacuole membrane and escape into the host cell cytoplasm. This chain is Secretion apparatus protein BsaZ (bsaZ), found in Burkholderia mallei (strain NCTC 10247).